The chain runs to 217 residues: Imidazole glycerol phosphate synthase subunit HisH (217 aa).

Residues 5 to 217 form the Glutamine amidotransferase type-1 domain; sequence RVGIINYGVG…LRLLANFLTL (213 aa). The active-site Nucleophile is the Cys-93. Catalysis depends on residues His-199 and Glu-201.

In terms of assembly, heterodimer of HisH and HisF.

It localises to the cytoplasm. The enzyme catalyses 5-[(5-phospho-1-deoxy-D-ribulos-1-ylimino)methylamino]-1-(5-phospho-beta-D-ribosyl)imidazole-4-carboxamide + L-glutamine = D-erythro-1-(imidazol-4-yl)glycerol 3-phosphate + 5-amino-1-(5-phospho-beta-D-ribosyl)imidazole-4-carboxamide + L-glutamate + H(+). The catalysed reaction is L-glutamine + H2O = L-glutamate + NH4(+). Its pathway is amino-acid biosynthesis; L-histidine biosynthesis; L-histidine from 5-phospho-alpha-D-ribose 1-diphosphate: step 5/9. Functionally, IGPS catalyzes the conversion of PRFAR and glutamine to IGP, AICAR and glutamate. The HisH subunit catalyzes the hydrolysis of glutamine to glutamate and ammonia as part of the synthesis of IGP and AICAR. The resulting ammonia molecule is channeled to the active site of HisF. The sequence is that of Imidazole glycerol phosphate synthase subunit HisH from Helicobacter hepaticus (strain ATCC 51449 / 3B1).